A 382-amino-acid chain; its full sequence is Neuropeptide Y receptor type 1 (382 aa).

Topologically, residues 1–33 are extracellular; that stretch reads MNSTSFSQVENHSIFCNFSENSQFLAFESDDCH. N-linked (GlcNAc...) asparagine glycosylation is found at N2, N11, and N17. Residues 34–54 traverse the membrane as a helical segment; sequence LPLAMIFTLALAYGAVIILGV. The Cytoplasmic segment spans residues 55-75; sequence TGNLALIMIILKQKEMRNVTN. A helical membrane pass occupies residues 76–96; sequence ILIVNLSFSDLLVAIMCLPFT. The Extracellular portion of the chain corresponds to 97–115; the sequence is FVYTLMDHWVFGEAMCKLN. C112 and C197 form a disulfide bridge. A helical transmembrane segment spans residues 116–136; the sequence is PFVQCVSITVSIFSLVLIAVE. At 137 to 153 the chain is on the cytoplasmic side; sequence RHQLIINPRGWRPNNRH. The chain crosses the membrane as a helical span at residues 154–174; sequence AYVGIAVIWVLAVVSSLPFLI. The Extracellular portion of the chain corresponds to 175–210; it reads YQVLTDEPFQNVTLDAFKDKYVCFDKFPSDSHRLSY. N-linked (GlcNAc...) asparagine glycosylation occurs at N185. Residues 211–231 form a helical membrane-spanning segment; that stretch reads TTLLLMLQYFGPLCFIFICYF. Topologically, residues 232 to 259 are cytoplasmic; that stretch reads KIYIRLKRRNNMMDKMRDNKYRSSETKR. The chain crosses the membrane as a helical span at residues 260–280; the sequence is INIMLLSIVVAFAVCWLPLTI. Residues 281-298 lie on the Extracellular side of the membrane; the sequence is FNTVFDWNHQIIATCNHN. Residues 299–319 form a helical membrane-spanning segment; sequence LLFLLCHLTAMISTCVNPIFY. At 320-382 the chain is on the cytoplasmic side; sequence GFLNKNFQRD…KINNDDNEKI (63 aa). A lipid anchor (S-palmitoyl cysteine) is attached at C337. S367 carries the post-translational modification Phosphoserine.

The protein belongs to the G-protein coupled receptor 1 family.

Its subcellular location is the cell membrane. In terms of biological role, receptor for neuropeptide Y and peptide YY. This chain is Neuropeptide Y receptor type 1 (NPY1R), found in Canis lupus familiaris (Dog).